We begin with the raw amino-acid sequence, 366 residues long: tRNA/tmRNA (uracil-C(5))-methyltransferase (366 aa).

Residues Gln-190, Tyr-218, Asn-223, Glu-239, and Asp-299 each coordinate S-adenosyl-L-methionine. Cys-324 functions as the Nucleophile in the catalytic mechanism. Glu-358 serves as the catalytic Proton acceptor.

It belongs to the class I-like SAM-binding methyltransferase superfamily. RNA M5U methyltransferase family. TrmA subfamily.

The catalysed reaction is uridine(54) in tRNA + S-adenosyl-L-methionine = 5-methyluridine(54) in tRNA + S-adenosyl-L-homocysteine + H(+). It carries out the reaction uridine(341) in tmRNA + S-adenosyl-L-methionine = 5-methyluridine(341) in tmRNA + S-adenosyl-L-homocysteine + H(+). Functionally, dual-specificity methyltransferase that catalyzes the formation of 5-methyluridine at position 54 (m5U54) in all tRNAs, and that of position 341 (m5U341) in tmRNA (transfer-mRNA). This Escherichia coli (strain UTI89 / UPEC) protein is tRNA/tmRNA (uracil-C(5))-methyltransferase.